Here is a 268-residue protein sequence, read N- to C-terminus: Tryptophan synthase alpha chain (268 aa).

Catalysis depends on proton acceptor residues Glu49 and Asp60.

The protein belongs to the TrpA family. Tetramer of two alpha and two beta chains.

It carries out the reaction (1S,2R)-1-C-(indol-3-yl)glycerol 3-phosphate + L-serine = D-glyceraldehyde 3-phosphate + L-tryptophan + H2O. The protein operates within amino-acid biosynthesis; L-tryptophan biosynthesis; L-tryptophan from chorismate: step 5/5. In terms of biological role, the alpha subunit is responsible for the aldol cleavage of indoleglycerol phosphate to indole and glyceraldehyde 3-phosphate. In Erwinia tasmaniensis (strain DSM 17950 / CFBP 7177 / CIP 109463 / NCPPB 4357 / Et1/99), this protein is Tryptophan synthase alpha chain.